We begin with the raw amino-acid sequence, 578 residues long: SUMOylated effector protein AmpA (578 aa).

Residues 144–169 (PQTVDPSVVESATGSGVDTQEEQEID) are disordered. Repeat copies occupy residues 180–272 (TEEQ…SVEA), 304–425 (KEET…VSVE), and 428–557 (TEEP…MQQE). The 3 X approximate tandem repeats stretch occupies residues 180 to 557 (TEEQEVILEE…VEADAGMQQE (378 aa)). Residues 516-578 (VSVEADAGMQ…DPDDEDVLSY (63 aa)) form a disordered region.

Polysumoylated during infection on at least two lysine residues, in the N- and C-terminal section. SUMO2/3 modification of AmpA throughout the infection cycle is likely critical for bacterial intracellular survival, while terminal SUMO1 conjugation of AmpA may promote a late-stage infection cycle event. Only a small portion of the available AmpA pool is actually SUMOylated at any given time.

It localises to the secreted. Its subcellular location is the host membrane. The protein resides in the host cytoplasm. It is found in the host cytosol. Its function is as follows. Secreted effector that hijacks host cell SUMOylation during A.phagocytophilum infection and is important for the pathogen's intracellular survival. This Anaplasma phagocytophilum (strain HZ) protein is SUMOylated effector protein AmpA.